Reading from the N-terminus, the 189-residue chain is Threonylcarbamoyl-AMP synthase (189 aa).

The YrdC-like domain maps to 9–189; sequence ASAQRKLSVY…IDGETGKRLR (181 aa).

Belongs to the SUA5 family. TsaC subfamily.

Its subcellular location is the cytoplasm. It carries out the reaction L-threonine + hydrogencarbonate + ATP = L-threonylcarbamoyladenylate + diphosphate + H2O. Required for the formation of a threonylcarbamoyl group on adenosine at position 37 (t(6)A37) in tRNAs that read codons beginning with adenine. Catalyzes the conversion of L-threonine, HCO(3)(-)/CO(2) and ATP to give threonylcarbamoyl-AMP (TC-AMP) as the acyladenylate intermediate, with the release of diphosphate. In Neisseria meningitidis serogroup C (strain 053442), this protein is Threonylcarbamoyl-AMP synthase.